Consider the following 434-residue polypeptide: Nicotinate phosphoribosyltransferase (434 aa).

Histidine 242 is modified (phosphohistidine; by autocatalysis).

It belongs to the NAPRTase family. Transiently phosphorylated on a His residue during the reaction cycle. Phosphorylation strongly increases the affinity for substrates and increases the rate of nicotinate D-ribonucleotide production. Dephosphorylation regenerates the low-affinity form of the enzyme, leading to product release.

The catalysed reaction is nicotinate + 5-phospho-alpha-D-ribose 1-diphosphate + ATP + H2O = nicotinate beta-D-ribonucleotide + ADP + phosphate + diphosphate. It participates in cofactor biosynthesis; NAD(+) biosynthesis; nicotinate D-ribonucleotide from nicotinate: step 1/1. Catalyzes the synthesis of beta-nicotinate D-ribonucleotide from nicotinate and 5-phospho-D-ribose 1-phosphate at the expense of ATP. This chain is Nicotinate phosphoribosyltransferase, found in Agrobacterium fabrum (strain C58 / ATCC 33970) (Agrobacterium tumefaciens (strain C58)).